Consider the following 540-residue polypeptide: Phosphoenolpyruvate carboxykinase (ATP) (540 aa).

Position 65 (Arg-65) interacts with substrate. Lys-87 bears the N6-acetyllysine mark. Residues Tyr-207 and Lys-213 each contribute to the substrate site. ATP-binding positions include Lys-213, His-232, and 248–256 (GLSGTGKTT). 2 residues coordinate Mn(2+): Lys-213 and His-232. Asp-269 provides a ligand contact to Mn(2+). Residues Glu-297, Arg-333, 449 to 450 (RI), and Thr-455 contribute to the ATP site. Arg-333 contacts substrate. At Lys-523 the chain carries N6-acetyllysine.

It belongs to the phosphoenolpyruvate carboxykinase (ATP) family. Monomer. It depends on Mn(2+) as a cofactor.

The protein resides in the cytoplasm. The catalysed reaction is oxaloacetate + ATP = phosphoenolpyruvate + ADP + CO2. Its pathway is carbohydrate biosynthesis; gluconeogenesis. Involved in the gluconeogenesis. Catalyzes the conversion of oxaloacetate (OAA) to phosphoenolpyruvate (PEP) through direct phosphoryl transfer between the nucleoside triphosphate and OAA. The polypeptide is Phosphoenolpyruvate carboxykinase (ATP) (Escherichia coli O45:K1 (strain S88 / ExPEC)).